The sequence spans 478 residues: Alpha,alpha-trehalose-phosphate synthase [UDP-forming] (478 aa).

D-glucose 6-phosphate-binding residues include Tyr-89 and Asp-143. Arg-280 and Lys-285 together coordinate UDP. Positions 280 and 285 each coordinate UDP-alpha-D-glucose. D-glucose 6-phosphate is bound at residue Arg-318. Residues Ile-357 and 383–387 contribute to the UDP site; that span reads LVSYE. UDP-alpha-D-glucose-binding positions include Ile-357 and 379-387; that span reads DGMNLVSYE.

Belongs to the glycosyltransferase 20 family.

The catalysed reaction is D-glucose 6-phosphate + UDP-alpha-D-glucose = alpha,alpha-trehalose 6-phosphate + UDP + H(+). The protein operates within carbohydrate biosynthesis. Inhibited by validoxylamine A, a non-reactive trehalose analog. Its function is as follows. Synthase catalytic subunit of the trehalose synthase complex that catalyzes the production of trehalose from glucose-6-phosphate and UDP-alpha-D-glucose in a two step process. This is Alpha,alpha-trehalose-phosphate synthase [UDP-forming] from Candida albicans (strain SC5314 / ATCC MYA-2876) (Yeast).